The chain runs to 616 residues: Glutamine--fructose-6-phosphate aminotransferase [isomerizing] (616 aa).

Cys-2 acts as the Nucleophile; for GATase activity in catalysis. Residues 2–221 (CGIVGYVGTD…QDQIVTITPE (220 aa)) form the Glutamine amidotransferase type-2 domain. 2 consecutive SIS domains span residues 288–428 (LGDE…VRGT) and 461–606 (LAHW…VDQP). Lys-611 (for Fru-6P isomerization activity) is an active-site residue.

Homodimer.

Its subcellular location is the cytoplasm. The enzyme catalyses D-fructose 6-phosphate + L-glutamine = D-glucosamine 6-phosphate + L-glutamate. Its function is as follows. Catalyzes the first step in hexosamine metabolism, converting fructose-6P into glucosamine-6P using glutamine as a nitrogen source. This is Glutamine--fructose-6-phosphate aminotransferase [isomerizing] from Leifsonia xyli subsp. xyli (strain CTCB07).